The primary structure comprises 235 residues: Probable RNA 2'-phosphotransferase (235 aa).

The protein belongs to the KptA/TPT1 family.

Functionally, removes the 2'-phosphate from RNA via an intermediate in which the phosphate is ADP-ribosylated by NAD followed by a presumed transesterification to release the RNA and generate ADP-ribose 1''-2''-cyclic phosphate (APPR&gt;P). May function as an ADP-ribosylase. This chain is Probable RNA 2'-phosphotransferase, found in Thermoplasma volcanium (strain ATCC 51530 / DSM 4299 / JCM 9571 / NBRC 15438 / GSS1).